The primary structure comprises 538 residues: Phosphoenolpyruvate carboxykinase (ATP) (538 aa).

Substrate-binding residues include arginine 64, tyrosine 205, and lysine 211. ATP-binding positions include lysine 211, histidine 230, and 246 to 254 (GLSGTGKTT). Lysine 211 and histidine 230 together coordinate Mn(2+). Aspartate 267 contributes to the Mn(2+) binding site. Residues glutamate 295, arginine 331, 447–448 (RI), and threonine 453 contribute to the ATP site. Arginine 331 lines the substrate pocket.

Belongs to the phosphoenolpyruvate carboxykinase (ATP) family. Monomer. Requires Mn(2+) as cofactor.

It localises to the cytoplasm. It carries out the reaction oxaloacetate + ATP = phosphoenolpyruvate + ADP + CO2. Its pathway is carbohydrate biosynthesis; gluconeogenesis. In terms of biological role, involved in the gluconeogenesis. Catalyzes the conversion of oxaloacetate (OAA) to phosphoenolpyruvate (PEP) through direct phosphoryl transfer between the nucleoside triphosphate and OAA. This is Phosphoenolpyruvate carboxykinase (ATP) from Histophilus somni (strain 129Pt) (Haemophilus somnus).